The sequence spans 214 residues: Homologous-pairing protein 2 homolog (214 aa).

Residues 79 to 147 (SDSELKDLDA…EHKLTNIKSA (69 aa)) adopt a coiled-coil conformation. Residues 115–179 (TSSLTTEEML…WKKRKRMATD (65 aa)) are DNA-binding.

Belongs to the HOP2 family.

The protein localises to the nucleus. In terms of biological role, plays an important role in meiotic recombination. Stimulates DMC1-mediated strand exchange required for pairing of homologous chromosomes during meiosis. The chain is Homologous-pairing protein 2 homolog (psmc3ip) from Xenopus laevis (African clawed frog).